A 57-amino-acid polypeptide reads, in one-letter code: High light-inducible protein HliD (57 aa).

Positions 25 to 30 (EKLNGR) match the Chlorophyll-binding motif motif. A helical transmembrane segment spans residues 25–46 (EKLNGRAAMVGFLLILVIEYFT).

The protein belongs to the Hlip family. As to quaternary structure, probably forms dimers which bind 6 chlorophyll a and 2 beta-carotenoid molecules. Cofractionates in an approximately 50 kDa fraction of the thylakoid membrane with HliC. Does not associate with mature PSII. Purified in several chlorophyll- and carotenoid-containing complexes, including photosystem II (PSII) assembly intermediate complex RCII* (iD1, D1, D2, PsbE, PsbF, PsbI, Ycf39, Ycf48, HliC and HliD) and the Ycf39-Hlip complex (Ycf39, HliC, HliD and pigments).

The protein resides in the cellular thylakoid membrane. Functionally, involved in photosystem II (PSII) assembly and/or repair under high light stress. Required for binding of chlorophyll and carotenoids by the Ycf39-Hlip complex. The Ycf39-Hlip complex binds D1 at an early stage of PSII assembly along with Ycf48, ribosomes and ChlG, the last enzyme in chlorophyll biosynthesis; it may be involved in chlorophyll reuse and delivery to D1 in the initial stages of PSII assembly. Binds chlorophyll a and beta-carotenoid in a 3:1 stoichiometry in the presence and absence of Yfc39; in the Ycf39-HliC-HliD complex, HliD binds all the pigment. The Ycf39-Hlip complex efficiently quenches chlorophyll fluorescence, contributing to photoprotection. Deletion of 4 to 5 members of the Hlip family suggests the proteins are involved in regulation of chlorophyll biosynthesis, in stabilization of chlorophyll-binding proteins and/or in reuse of chlorophylls, and may regulate tetrapyrrole biosynthesis. Might bind chlorophyll and/or carotenoids in association with HliC (called the ScpBE pair). In terms of biological role, the Hlips might regulate tetrapyrrole biosynthesis, maybe at the level of aminolevulinic acid synthesis and probably stabilize PSII assembly intermediates. The polypeptide is High light-inducible protein HliD (hliD) (Synechocystis sp. (strain ATCC 27184 / PCC 6803 / Kazusa)).